The following is a 310-amino-acid chain: Probable manganese-dependent inorganic pyrophosphatase (310 aa).

Residues histidine 9, aspartate 13, aspartate 15, aspartate 76, histidine 98, and aspartate 150 each contribute to the Mn(2+) site.

This sequence belongs to the PPase class C family. As to quaternary structure, homodimer. Mn(2+) is required as a cofactor.

Its subcellular location is the cytoplasm. The enzyme catalyses diphosphate + H2O = 2 phosphate + H(+). The protein is Probable manganese-dependent inorganic pyrophosphatase (ppaC) of Streptococcus mutans serotype c (strain ATCC 700610 / UA159).